A 205-amino-acid polypeptide reads, in one-letter code: MANTLYDRTIAFAGICQAVALVQQVARNGHCDQDAFETSMNAILNTNPANTIGVFGREADLKLGLECLVKGIDSTPSGSEITRYIISLMALERKLTARTDAMSQLGDRIQMAKRQTEHFELLEDQMISNLASIYLDVVSPIGPRIQVTGTPSVLQQTANQHKVRALLLSGIRSAVLWRQVGGKRRHLIFGRKKMVEQAQILLARM.

The protein belongs to the HflD family.

It localises to the cytoplasm. It is found in the cell inner membrane. This is High frequency lysogenization protein HflD homolog from Vibrio parahaemolyticus serotype O3:K6 (strain RIMD 2210633).